The primary structure comprises 110 residues: Competence pilus inhibition repressor (110 aa).

The HTH cro/C1-type domain maps to 7 to 61 (VRFLRKRQGWTQQQLADFSHTSKSNISNLENGNQGYSPAILEYLAKAFNCSVSQI). Positions 18-37 (QQQLADFSHTSKSNISNLEN) form a DNA-binding region, H-T-H motif.

Its function is as follows. Represses transcription of the PilB-specific inhibitory protein CpiA. The chain is Competence pilus inhibition repressor from Acinetobacter baylyi (strain ATCC 33305 / BD413 / ADP1).